Reading from the N-terminus, the 202-residue chain is Cilia- and flagella-associated protein 418 (202 aa).

The segment at 71–90 (DVDTPTSTHEPSPAKASSSA) is disordered. Residues 74-90 (TPTSTHEPSPAKASSSA) show a composition bias toward polar residues.

In terms of tissue distribution, ubiquitously expressed during early development and in adult tissues including the eye, brain, heart and kidney.

It is found in the cytoplasm. It localises to the photoreceptor inner segment. May be involved in photoreceptor outer segment disk morphogenesis. In Danio rerio (Zebrafish), this protein is Cilia- and flagella-associated protein 418 (cfap418).